The following is a 185-amino-acid chain: UPF0301 protein PSHAa2600 (185 aa).

Belongs to the UPF0301 (AlgH) family.

The polypeptide is UPF0301 protein PSHAa2600 (Pseudoalteromonas translucida (strain TAC 125)).